The chain runs to 422 residues: Inhibitory synaptic factor 2A (422 aa).

Residues 143 to 163 form a disordered region; that stretch reads FLADSKEKSEAGPMEEPRPCS. Over residues 146-160 the composition is skewed to basic and acidic residues; the sequence is DSKEKSEAGPMEEPR. Residue Ser-177 is modified to Phosphoserine. Residues 344-370 adopt a coiled-coil conformation; the sequence is TEVVDLKAQLQVMENLISSSQETIKVL.

Belongs to the INSYN2 family. As to quaternary structure, interacts with GPHN.

Its subcellular location is the postsynaptic density. Functionally, component of the protein machinery at the inhibitory synapses, probably acting as a scaffold. Inhibitory synapses dampen neuronal activity through postsynaptic hyperpolarization. This synaptic inhibition is fundamental for the functioning of the central nervous system, shaping and orchestrating the flow of information through neuronal networks to generate a precise neural code. The chain is Inhibitory synaptic factor 2A from Mus musculus (Mouse).